A 492-amino-acid chain; its full sequence is Aspartyl/glutamyl-tRNA(Asn/Gln) amidotransferase subunit B (492 aa).

This sequence belongs to the GatB/GatE family. GatB subfamily. Heterotrimer of A, B and C subunits.

The enzyme catalyses L-glutamyl-tRNA(Gln) + L-glutamine + ATP + H2O = L-glutaminyl-tRNA(Gln) + L-glutamate + ADP + phosphate + H(+). The catalysed reaction is L-aspartyl-tRNA(Asn) + L-glutamine + ATP + H2O = L-asparaginyl-tRNA(Asn) + L-glutamate + ADP + phosphate + 2 H(+). Allows the formation of correctly charged Asn-tRNA(Asn) or Gln-tRNA(Gln) through the transamidation of misacylated Asp-tRNA(Asn) or Glu-tRNA(Gln) in organisms which lack either or both of asparaginyl-tRNA or glutaminyl-tRNA synthetases. The reaction takes place in the presence of glutamine and ATP through an activated phospho-Asp-tRNA(Asn) or phospho-Glu-tRNA(Gln). The polypeptide is Aspartyl/glutamyl-tRNA(Asn/Gln) amidotransferase subunit B (Bradyrhizobium diazoefficiens (strain JCM 10833 / BCRC 13528 / IAM 13628 / NBRC 14792 / USDA 110)).